The sequence spans 376 residues: MTVSKFVQVRRDLHKIPEIGFKEWKTQQYILDYIGTLPNEYLEVKTWKTGVIVKVNGKNPEKIIGYRADIDGLPITEETGYEYSSVHEGMMHACGHDLHATIGLGLLTAAVSERIDDDLVFIFQPAEEGPGGALPMLESDELKEWKPNMILGLHIAPEYSVGTIATKEGLLFANTSELYVDLKGKGGHAAYPHTANDMIVAASHLVTQLQSVISRNVNPLDSAVITIGKITGGTVQNIIAEKSRLEGTIRTLSVESMKRVKSRIEAIVAGIEASFQCEAVIDYGAMYHQVYNHEELTREFMQFTREQTTMDVITCTEAMTGEDFGYMLREIPGFMFWLGVNSEYGLHHAKLKPDEEVIEKAIVFLNQYVKWKGNRK.

The active site involves D69. The active-site Proton acceptor is the E128.

The protein belongs to the peptidase M20A family. N-acetyldiaminopimelate deacetylase subfamily.

It catalyses the reaction N-acetyl-(2S,6S)-2,6-diaminopimelate + H2O = (2S,6S)-2,6-diaminopimelate + acetate. It participates in amino-acid biosynthesis; L-lysine biosynthesis via DAP pathway; LL-2,6-diaminopimelate from (S)-tetrahydrodipicolinate (acetylase route): step 3/3. Functionally, catalyzes the conversion of N-acetyl-diaminopimelate to diaminopimelate and acetate. This chain is N-acetyldiaminopimelate deacetylase, found in Bacillus mycoides (strain KBAB4) (Bacillus weihenstephanensis).